A 62-amino-acid chain; its full sequence is Large ribosomal subunit protein bL32 (62 aa).

This sequence belongs to the bacterial ribosomal protein bL32 family.

This chain is Large ribosomal subunit protein bL32 (rpmF), found in Treponema pallidum (strain Nichols).